A 185-amino-acid polypeptide reads, in one-letter code: Ribosome-recycling factor (185 aa).

Residues 138–185 form a disordered region; it reads ALKKQEKDGEITEDEERRLEKEVQKVTDESTKKIDQMADNKRKEIIQG.

Belongs to the RRF family.

The protein localises to the cytoplasm. Functionally, responsible for the release of ribosomes from messenger RNA at the termination of protein biosynthesis. May increase the efficiency of translation by recycling ribosomes from one round of translation to another. This Lactobacillus delbrueckii subsp. bulgaricus (strain ATCC 11842 / DSM 20081 / BCRC 10696 / JCM 1002 / NBRC 13953 / NCIMB 11778 / NCTC 12712 / WDCM 00102 / Lb 14) protein is Ribosome-recycling factor.